The sequence spans 482 residues: MAQTQGTRRKVCYYYDGDVGNYYYGQGHPMKPHRIRMTHNLLLNYGLYRKMEIYRPHKANAEEMTKYHSDDYIKFLRSIRPDNMSEYSKQMQRFNVGEDCPVFDGLFEFCQLSTGGSVASAVKLNKQQTDIAVNWAGGLHHAKKSEASGFCYVNDIVLAILELLKYHQRVLYIDIDIHHGDGVEEAFYTTDRVMTVSFHKYGEYFPGTGDLRDIGAGKGKYYAVNYPLRDGIDDESYEAIFKPVMSKVMEMFQPSAVVLQCGSDSLSGDRLGCFNLTIKGHAKCVEFVKSFNLPMLMLGGGGYTIRNVARCWTYETAVALDTEIPNELPYNDYFEYFGPDFKLHISPSNMTNQNTNEYLEKIKQRLFENLRMLPHAPGVQMQAIPEDAIPEESGDEDEDDPDKRISICSSDKRIACEEEFSDSEEEGEGGRKNSSNFKKAKRVKTEDEKEKDPEEKKEVTEEEKTKEEKPEAKGVKEEVKLA.

Positions 9–321 (RKVCYYYDGD…WTYETAVALD (313 aa)) are histone deacetylase. 2 residues coordinate 1D-myo-inositol 1,4,5,6-tetrakisphosphate: Gly-27 and Lys-31. Lys-74 is subject to N6-acetyllysine; alternate. Lys-74 participates in a covalent cross-link: Glycyl lysine isopeptide (Lys-Gly) (interchain with G-Cter in SUMO2); alternate. His-141 is a catalytic residue. The Zn(2+) site is built by Asp-176 and His-178. Lys-220 carries the post-translational modification N6-acetyllysine. At Cys-261 the chain carries S-nitrosocysteine. Asp-264 provides a ligand contact to Zn(2+). A 1D-myo-inositol 1,4,5,6-tetrakisphosphate-binding site is contributed by Arg-270. Cys-273 carries the post-translational modification S-nitrosocysteine. Over residues 390-400 (PEESGDEDEDD) the composition is skewed to acidic residues. Residues 390-482 (PEESGDEDED…KGVKEEVKLA (93 aa)) are disordered. 3 positions are modified to phosphoserine: Ser-393, Ser-406, and Ser-409. The segment covering 401 to 416 (PDKRISICSSDKRIAC) has biased composition (basic and acidic residues). Positions 417 to 427 (EEEFSDSEEEG) are enriched in acidic residues. A phosphoserine; by CK2 mark is found at Ser-421 and Ser-423. Lys-432 is subject to N6-methylated lysine; by EHMT2. Lys-438 participates in a covalent cross-link: Glycyl lysine isopeptide (Lys-Gly) (interchain with G-Cter in SUMO2). The span at 443-482 (VKTEDEKEKDPEEKKEVTEEEKTKEEKPEAKGVKEEVKLA) shows a compositional bias: basic and acidic residues. Residue Lys-444 forms a Glycyl lysine isopeptide (Lys-Gly) (interchain with G-Cter in SUMO2); alternate linkage. A Glycyl lysine isopeptide (Lys-Gly) (interchain with G-Cter in SUMO); alternate cross-link involves residue Lys-444. Residues Lys-456, Lys-457, and Lys-473 each participate in a glycyl lysine isopeptide (Lys-Gly) (interchain with G-Cter in SUMO2) cross-link. Residue Lys-476 forms a Glycyl lysine isopeptide (Lys-Gly) (interchain with G-Cter in SUMO2); alternate linkage. Lys-476 is covalently cross-linked (Glycyl lysine isopeptide (Lys-Gly) (interchain with G-Cter in SUMO); alternate). Lys-480 participates in a covalent cross-link: Glycyl lysine isopeptide (Lys-Gly) (interchain with G-Cter in SUMO2).

This sequence belongs to the histone deacetylase family. HD type 1 subfamily. Part of the core histone deacetylase (HDAC) complex composed of HDAC1, HDAC2, RBBP4 and RBBP7, the core complex associates with SIN3, SAP18 and SAP30 to form the SIN3 HDAC complex. Component of the nucleosome remodeling and deacetylase (NuRD) repressor complex, composed of core proteins MTA1, MTA2, MTA3, RBBP4, RBBP7, HDAC1, HDAC2, MBD2, MBD3, and peripherally associated proteins CDK2AP1, CDK2AP2, GATAD2A, GATAD2B, CHD3, CHD4 and CHD5. The exact stoichiometry of the NuRD complex is unknown, and some subunits such as MBD2 and MBD3, GATAD2A and GATAD2B, and CHD3, CHD4 and CHD5 define mutually exclusive NuRD complexes. Component of a BHC histone deacetylase complex that contains HDAC1, HDAC2, HMG20B/BRAF35, KDM1A, RCOR1/CoREST and PHF21A/BHC80. The BHC complex may also contain ZMYM2, ZNF217, ZMYM3, GSE1 and GTF2I. Component of a mSin3A corepressor complex that contains SIN3A, SAP130, SUDS3/SAP45, ARID4B/SAP180, HDAC1 and HDAC2. Component of the SIN3B complex, which includes SIN3B, HDAC1, PHF12 and MORF4L1. Found in a trimeric complex with APBB1 and TSHZ3; the interaction between HDAC1 and APBB1 is mediated by TSHZ3. Forms a complex comprising APPL1, RUVBL2, APPL2, CTNNB1 and HDAC2. Component of a RCOR/GFI/KDM1A/HDAC complex. Part of a complex composed of TRIM28, HDAC1, HDAC2 and EHMT2. Part of a complex containing at least CDYL, MIER1, MIER2, HDAC1 and HDAC2. The large PER complex involved in the histone deacetylation is composed of at least HDAC1, PER2, SFPQ and SIN3A. Associates with the 9-1-1 complex; interacts with HUS1. Found in a complex with DNMT3A and HDAC7. Found in a complex with YY1, SIN3A and GON4L. Identified in a histone deacetylase complex that contains DNTTIP1, HDAC1 and MIDEAS; this complex assembles into a tetramer that contains four copies of each protein chain. Found in a complex composed of at least SINHCAF, SIN3A, HDAC1, SAP30, RBBP4, OGT and TET1. Interacts with GFI1; the interaction is direct. Interacts directly with GFI1B. Interacts with TSHZ3 (via N-terminus); the interaction is direct. Interacts with APEX1; the interaction is not dependent on the acetylated status of APEX1. Interacts with BANP. Interacts with BAZ2A/TIP5. Interacts with BCL6. Interacts with BCOR. Interacts with BHLHE40/DEC1. Interacts with BRCC3; this interaction is enhanced in the presence of PWWP2B. Interacts with BRMS1. Interacts with BRMS1L. Interacts with C10orf90/FATS (via its N-terminal); the interaction prevents binding of HDAC1 to CDKN1A/p21 and facilitates the acetylation and stabilization of CDKN1A/p21. Interacts with CBFA2T3. Interacts with CCAR2. Interacts with CDK2AP1. Interacts with CHD3. Interacts with CHD4. Interacts with CHFR. Interacts with CIART. Interacts with CDKN1A/p21. Interacts with CDK5 complexed to CDK5R1 (p25). Interacts with CRY1. Interacts with DAXX. Interacts with DDIT3/CHOP. Interacts with DDX5. Interacts with DHX36; this interaction occurs in a RNA-dependent manner. Interacts with DNMT1. Interacts with DNTTIP1. Interacts with E4F1. Interacts with EP300. Interacts with ERCC6. Interacts with GATAD2A. Interacts with HCFC1. Interacts with HDAC9. Interacts with HUS1. Interacts with INSM1. Interacts with KDM4A. Interacts with KDM5A; this interaction impairs histone deacetylation. Interacts with KDM5B. Interacts with KLF1. Interacts with MBD3L2. Interacts with MIER1. Interacts with NFE4. Interacts with NR4A2/NURR1. Interacts with NR1D2 (via C-terminus). Interacts with NRIP1. Interacts with NSD2. Interacts with PACS2. Interacts with PHB2. Interacts with PPHLN1. Interacts with PRDM6. Interacts with PRDM16. Interacts with PWWP2A in a MTA1-dependent manner. Interacts with PWWP2B. Interacts with RB1. Interacts with RERE. Interacts with SANBR (via the BTB domain). Interacts with SAMSN1. Interacts with SAP30L. Interacts with SETDB1. Interacts with SIN3A. Interacts with SMAD3. Interacts with SMAD4; positively regulated by ZBTB7A. Interacts with SMARCAD1. Interacts with SMARCA4/BRG1. Interacts with SMYD2. Interacts with SMYD4 (via MYND-type zinc finger). Interacts with SP1; the interaction deacetylates SP1 and regulates its transcriptional activity. Interacts with SP3; the interaction deacetylates SP3 and regulates its transcriptional activity. In vitro, C(18) ceramides increase this interaction and the subsequent SP3 deacetylation and SP3-mediated repression of the TERT promoter. Interacts with SPEN/MINT. Interacts with SPHK2. Interacts with SUV39H1. Interacts with TGIF. Interacts with TGIF2. Interacts with TRAF6. Interacts with TRIM28; the interaction recruits HDAC1 to E2F1 and inhibits its acetylation. Interacts with TSC22D3 isoform 1; this interaction affects HDAC1 activity on MYOG promoter and thus inhibits MYOD1 transcriptional activity. Interacts with UHRF1. Interacts with UHRF2. Interacts with ZBTB7A. Interacts with ZMYND8. Interacts with ZMYND15. Interacts with ZNF431. Interacts with ZNF516; this interaction is enhanced in the presence of PWWP2B. Interacts with ZNF541. Interacts with ZNF638. Interacts with ZNHIT1. Interacts with the non-histone region of MACROH2A1. Identified in a complex with HDAC2, KCTD19, DNTTIP1 and ZNF541. Interacts with VRK1. In terms of assembly, (Microbial infection) Interacts with SV40 large T antigen. It depends on Zn(2+) as a cofactor. Sumoylated on Lys-444 and Lys-476; which promotes enzymatic activity. Desumoylated by SENP1. Post-translationally, phosphorylation on Ser-421 and Ser-423 promotes enzymatic activity and interactions with NuRD and SIN3 complexes. Phosphorylated by CDK5. In terms of processing, ubiquitinated by CHFR, leading to its degradation by the proteasome. Ubiquitinated by KCTD11, leading to proteasomal degradation. In terms of tissue distribution, ubiquitous, with higher levels in heart, pancreas and testis, and lower levels in kidney and brain.

It is found in the nucleus. It carries out the reaction N(6)-acetyl-L-lysyl-[histone] + H2O = L-lysyl-[histone] + acetate. It catalyses the reaction N(6)-acetyl-L-lysyl-[protein] + H2O = L-lysyl-[protein] + acetate. The enzyme catalyses N(6)-(2E)-butenoyl-L-lysyl-[protein] + H2O = (2E)-2-butenoate + L-lysyl-[protein]. The catalysed reaction is N(6)-[(S)-lactoyl]-L-lysyl-[protein] + H2O = (S)-lactate + L-lysyl-[protein]. With respect to regulation, inositol tetraphosphate (1D-myo-inositol 1,4,5,6-tetrakisphosphate) may act as an intermolecular glue between HDAC1 and N-Cor repressor complex components. In terms of biological role, histone deacetylase that catalyzes the deacetylation of lysine residues on the N-terminal part of the core histones (H2A, H2B, H3 and H4). Histone deacetylation gives a tag for epigenetic repression and plays an important role in transcriptional regulation, cell cycle progression and developmental events. Histone deacetylases act via the formation of large multiprotein complexes. Acts as a component of the histone deacetylase NuRD complex which participates in the remodeling of chromatin. As part of the SIN3B complex is recruited downstream of the constitutively active genes transcriptional start sites through interaction with histones and mitigates histone acetylation and RNA polymerase II progression within transcribed regions contributing to the regulation of transcription. Also functions as a deacetylase for non-histone targets, such as NR1D2, RELA, SP1, SP3, STAT3 and TSHZ3. Deacetylates SP proteins, SP1 and SP3, and regulates their function. Component of the BRG1-RB1-HDAC1 complex, which negatively regulates the CREST-mediated transcription in resting neurons. Upon calcium stimulation, HDAC1 is released from the complex and CREBBP is recruited, which facilitates transcriptional activation. Deacetylates TSHZ3 and regulates its transcriptional repressor activity. Deacetylates 'Lys-310' in RELA and thereby inhibits the transcriptional activity of NF-kappa-B. Deacetylates NR1D2 and abrogates the effect of KAT5-mediated relieving of NR1D2 transcription repression activity. Component of a RCOR/GFI/KDM1A/HDAC complex that suppresses, via histone deacetylase (HDAC) recruitment, a number of genes implicated in multilineage blood cell development. Involved in CIART-mediated transcriptional repression of the circadian transcriptional activator: CLOCK-BMAL1 heterodimer. Required for the transcriptional repression of circadian target genes, such as PER1, mediated by the large PER complex or CRY1 through histone deacetylation. In addition to protein deacetylase activity, also has protein-lysine deacylase activity: acts as a protein decrotonylase and delactylase by mediating decrotonylation ((2E)-butenoyl) and delactylation (lactoyl) of histones, respectively. The chain is Histone deacetylase 1 from Homo sapiens (Human).